The sequence spans 428 residues: Peptidase B (428 aa).

Lys195 and Asp200 together coordinate Mn(2+). Lys207 is an active-site residue. Asp218, Asp277, and Glu279 together coordinate Mn(2+). Arg281 is an active-site residue.

Belongs to the peptidase M17 family. As to quaternary structure, homohexamer. It depends on Mn(2+) as a cofactor.

It localises to the cytoplasm. The catalysed reaction is Release of an N-terminal amino acid, Xaa, from a peptide or arylamide. Xaa is preferably Glu or Asp but may be other amino acids, including Leu, Met, His, Cys and Gln.. Probably plays an important role in intracellular peptide degradation. The chain is Peptidase B from Klebsiella pneumoniae (strain 342).